Consider the following 181-residue polypeptide: Large ribosomal subunit protein uL16 (181 aa).

The protein belongs to the universal ribosomal protein uL16 family.

The chain is Large ribosomal subunit protein uL16 from Pyrococcus abyssi (strain GE5 / Orsay).